The sequence spans 460 residues: Cysteine--tRNA ligase (460 aa).

Cys29 is a binding site for Zn(2+). A 'HIGH' region motif is present at residues 31–41 (ATPQSSPHIGH). Positions 212, 237, and 241 each coordinate Zn(2+). A 'KMSKS' region motif is present at residues 268 to 272 (KMSKS). Lys271 is an ATP binding site.

The protein belongs to the class-I aminoacyl-tRNA synthetase family. Monomer. Zn(2+) serves as cofactor.

It is found in the cytoplasm. It carries out the reaction tRNA(Cys) + L-cysteine + ATP = L-cysteinyl-tRNA(Cys) + AMP + diphosphate. The protein is Cysteine--tRNA ligase of Corynebacterium glutamicum (strain ATCC 13032 / DSM 20300 / JCM 1318 / BCRC 11384 / CCUG 27702 / LMG 3730 / NBRC 12168 / NCIMB 10025 / NRRL B-2784 / 534).